A 974-amino-acid chain; its full sequence is Isoleucine--tRNA ligase (974 aa).

Positions 69–79 (PYANGALHMGH) match the 'HIGH' region motif. L-isoleucyl-5'-AMP is bound at residue Glu585. The short motif at 626-630 (KMSKS) is the 'KMSKS' region element. Residue Lys629 coordinates ATP. Residues Cys939, Cys942, Cys959, and Cys962 each contribute to the Zn(2+) site.

The protein belongs to the class-I aminoacyl-tRNA synthetase family. IleS type 1 subfamily. Monomer. The cofactor is Zn(2+).

Its subcellular location is the cytoplasm. The enzyme catalyses tRNA(Ile) + L-isoleucine + ATP = L-isoleucyl-tRNA(Ile) + AMP + diphosphate. In terms of biological role, catalyzes the attachment of isoleucine to tRNA(Ile). As IleRS can inadvertently accommodate and process structurally similar amino acids such as valine, to avoid such errors it has two additional distinct tRNA(Ile)-dependent editing activities. One activity is designated as 'pretransfer' editing and involves the hydrolysis of activated Val-AMP. The other activity is designated 'posttransfer' editing and involves deacylation of mischarged Val-tRNA(Ile). The chain is Isoleucine--tRNA ligase from Parasynechococcus marenigrum (strain WH8102).